Here is a 464-residue protein sequence, read N- to C-terminus: tRNA modification GTPase MnmE (464 aa).

Positions 29, 91, and 131 each coordinate (6S)-5-formyl-5,6,7,8-tetrahydrofolate. Residues 226 to 387 enclose the TrmE-type G domain; it reads GLKVALTGKP…LINYLLKKCG (162 aa). K(+) is bound at residue Asn-236. GTP is bound by residues 236-241, 255-261, and 280-283; these read NVGKSS, TDLPGTT, and DTAG. Ser-240 lines the Mg(2+) pocket. K(+) is bound by residues Thr-255, Leu-257, and Thr-260. Residue Thr-261 coordinates Mg(2+). Lys-464 is a (6S)-5-formyl-5,6,7,8-tetrahydrofolate binding site.

Belongs to the TRAFAC class TrmE-Era-EngA-EngB-Septin-like GTPase superfamily. TrmE GTPase family. In terms of assembly, homodimer. Heterotetramer of two MnmE and two MnmG subunits. K(+) is required as a cofactor.

It localises to the cytoplasm. Functionally, exhibits a very high intrinsic GTPase hydrolysis rate. Involved in the addition of a carboxymethylaminomethyl (cmnm) group at the wobble position (U34) of certain tRNAs, forming tRNA-cmnm(5)s(2)U34. In Prochlorococcus marinus (strain NATL2A), this protein is tRNA modification GTPase MnmE.